The sequence spans 196 residues: Large ribosomal subunit protein eL15 (196 aa).

The tract at residues 156–196 (HRGRAERGKTSAGRKGRGMRTRGRGTEKTRPSIRSHANQGK) is disordered. Positions 167–178 (AGRKGRGMRTRG) are enriched in basic residues.

This sequence belongs to the eukaryotic ribosomal protein eL15 family.

This is Large ribosomal subunit protein eL15 from Methanoregula boonei (strain DSM 21154 / JCM 14090 / 6A8).